A 161-amino-acid chain; its full sequence is MSIVTKSIVNADAEARYLSPGELDRIKSFVMSGQRRLRIAQILTDNRERIVKQAGQQLFQKRPDIVSPGGNAYGEEMTATCLRDLDYYLRLITYSVVAGDVIPIEEIGLVGVREMYNSLGTPLSGVAEGIRSMKSVVSGLLAGDDAAEASFYFDYAIGAMQ.

At N71 the chain carries N4-methylasparagine. (2R,3E)-phycocyanobilin is bound at residue C81.

It belongs to the phycobiliprotein family. As to quaternary structure, heterodimer of an alpha and a beta chain. In terms of processing, contains one covalently linked phycocyanobilin chromophore.

It localises to the plastid. It is found in the chloroplast thylakoid membrane. Light-harvesting photosynthetic bile pigment-protein from the phycobiliprotein complex. Allophycocyanin has a maximum absorption at approximately 650 nanometers. This chain is Allophycocyanin alpha chain (apcA), found in Cyanidium caldarium (Red alga).